A 1083-amino-acid chain; its full sequence is DNA-directed RNA polymerase subunit beta (1083 aa).

This sequence belongs to the RNA polymerase beta chain family. In terms of assembly, in plastids the minimal PEP RNA polymerase catalytic core is composed of four subunits: alpha, beta, beta', and beta''. When a (nuclear-encoded) sigma factor is associated with the core the holoenzyme is formed, which can initiate transcription.

Its subcellular location is the plastid. The protein localises to the chloroplast. The enzyme catalyses RNA(n) + a ribonucleoside 5'-triphosphate = RNA(n+1) + diphosphate. Functionally, DNA-dependent RNA polymerase catalyzes the transcription of DNA into RNA using the four ribonucleoside triphosphates as substrates. In Acorus calamus var. americanus (American sweet flag), this protein is DNA-directed RNA polymerase subunit beta.